The following is a 1429-amino-acid chain: Protein lin-12 (1429 aa).

Positions 1 to 15 (MRIPTICFLFLLISL) are cleaved as a signal peptide. The Extracellular segment spans residues 16 to 908 (SKSLHIGSCL…GNNTGFLSWN (893 aa)). EGF-like domains follow at residues 20 to 61 (HIGS…EYCE) and 114 to 150 (TQGWCYPSVCMNGGQCIGAGNRAKCACPDGFKGERCE). Intrachain disulfides connect cysteine 24/cysteine 35, cysteine 29/cysteine 49, cysteine 51/cysteine 60, cysteine 118/cysteine 129, cysteine 123/cysteine 138, cysteine 140/cysteine 149, cysteine 156/cysteine 169, cysteine 163/cysteine 178, and cysteine 180/cysteine 189. The N-linked (GlcNAc...) asparagine glycan is linked to asparagine 41. Residues 152–190 (DVNECEENKNACGNRSTCMNTLGTYICVCPQGFLPPDCL) enclose the EGF-like 3; calcium-binding domain. The N-linked (GlcNAc...) asparagine glycan is linked to asparagine 165. N-linked (GlcNAc...) asparagine glycosylation occurs at asparagine 194. EGF-like domains follow at residues 201-246 (KQPV…STCE), 250-285 (KEDSCASNPCSHGVCISFSGGFQCICDDGYSGSYCQ), 287-323 (GKDNCVNNKCEAGSKCINGVNSYFCDCPPERTGPYCE), and 323-363 (EKMD…ILCE). 30 disulfide bridges follow: cysteine 205–cysteine 227, cysteine 221–cysteine 234, cysteine 236–cysteine 245, cysteine 254–cysteine 264, cysteine 259–cysteine 273, cysteine 275–cysteine 284, cysteine 291–cysteine 302, cysteine 296–cysteine 311, cysteine 313–cysteine 322, cysteine 327–cysteine 339, cysteine 334–cysteine 351, cysteine 353–cysteine 362, cysteine 369–cysteine 381, cysteine 375–cysteine 390, cysteine 392–cysteine 401, cysteine 408–cysteine 419, cysteine 413–cysteine 429, cysteine 431–cysteine 440, cysteine 462–cysteine 475, cysteine 469–cysteine 480, cysteine 482–cysteine 491, cysteine 507–cysteine 518, cysteine 512–cysteine 529, cysteine 531–cysteine 540, cysteine 547–cysteine 558, cysteine 552–cysteine 567, cysteine 569–cysteine 578, cysteine 586–cysteine 597, cysteine 591–cysteine 607, and cysteine 609–cysteine 618. The EGF-like 8; calcium-binding domain maps to 365–402 (DKNECLSENMCLNNGTCVNLPGSFRCDCARGFGGKWCD). N-linked (GlcNAc...) asparagine glycosylation occurs at asparagine 378. EGF-like domains lie at 404–441 (PLNMCQDFHCENDGTCMHTSDHSPVCQCKNGFIGKRCE), 449–492 (GGVR…NQCE), 503–541 (SENLCLSDPCMNNATCIDVDAHIGYACICKQGFEGDICE), 543–579 (HKDLCLENPCSNGGVCHQHRESFSCDCPPGFYGNGCE), and 582–619 (KMFRCLKSTCQNGGVCINEEEKGRKCECSYGFSGARCE). Asparagine 515 carries N-linked (GlcNAc...) asparagine glycosylation. An N-linked (GlcNAc...) asparagine glycan is attached at asparagine 623. Disulfide bonds link cysteine 638–cysteine 661, cysteine 643–cysteine 656, cysteine 652–cysteine 668, cysteine 678–cysteine 702, cysteine 684–cysteine 697, cysteine 693–cysteine 709, cysteine 716–cysteine 742, cysteine 724–cysteine 737, and cysteine 733–cysteine 749. LNR repeat units lie at residues 638–674 (CEKRKCSERANDGNCDADCNYAACKFDGGDCSGKREP), 678–709 (CRYGNMCADFFANGVCNQACNNEECLYDGMDC), and 716–754 (CPVKIREHCASRFANGICDPECNTNGCGFDGGDCDNETN). Residues asparagine 751, asparagine 754, and asparagine 900 are each glycosylated (N-linked (GlcNAc...) asparagine). Residues 909-931 (ALLLIGAGCLIVMVVLMLGALPG) form a helical membrane-spanning segment. The Cytoplasmic segment spans residues 932–1429 (NRTRKRRMIN…TRYSEPAHYF (498 aa)). The interval 933 to 952 (RTRKRRMINASVWMPPMENE) is RAM domain. 5 ANK repeats span residues 1093-1122 (DENTPLMLAVLARRRRLVAYLMKAGADPTI), 1126-1158 (SERSALHQAAANRDFGMMVYMLNSTKLKGDIEE), 1162-1194 (NGMTALMIVAHNEGRDQVASAKLLVEKGAKVDY), 1206-1236 (KGRTALHYAAQVSNMPIVKYLVGEKGSNKDK), and 1240-1269 (DGKTPIMLAAQEGRIEVVMYLIQQGASVEA). The tract at residues 1308–1374 (IQHTHQPQPS…TTHTTPTSLN (67 aa)) is disordered. Positions 1319–1330 (KVTRAPKKQTSR) are enriched in basic residues. Residues 1361-1374 (HFMNTTHTTPTSLN) show a composition bias toward polar residues.

Belongs to the NOTCH family. In terms of assembly, may interact with dsl-1. May interact with lag-2. May interact with osm-11. Interacts with sel-10. As to quaternary structure, when activated, the lin-12/Notch intracellular domain (NICD) can become a component of a complex consisting of at least the NICD, lag-1 and sel-8/lag-3. The NICD probably facilitates ordered assembly of the ternary complex via allosteric interactions of its RBP-j associated molecule (RAM) domain with lag-1. In terms of processing, upon binding its ligands, it is cleaved (S2 cleavage) in its extracellular domain, close to the transmembrane domain. S2 cleavage is probably mediated by the metalloproteases adm-4 and sup-17. It is then cleaved (S3 cleavage) downstream of its transmembrane domain, releasing it from the cell membrane; S3 cleavage requires a multiprotein gamma-secretase complex, which may include presenilin sel-12.

The protein localises to the apical cell membrane. Its subcellular location is the nucleus. Its function is as follows. Essential signaling protein which has a major role in many developmental processes; involved in cell fate decisions that require cell-cell interactions. Probable membrane-bound receptor for putative ligands lag-2, apx-1, dsl-1 and osm-11. Upon ligand activation, and releasing from the cell membrane, the lin-12/Notch intracellular domain (NICD) forms a transcriptional activator complex with lag-1 and lag-3 and regulates expression of various genes. Required for ventral cell fates in the postembryonic mesodermal lineage (M lineage) and in uterine precursor cells. Activity in cell fate decisions and tumorigenesis is negatively regulated by sel-10. Best known for involvement in cell-fate decisions during development, but also plays roles in other events. Regulates recovery from the dauer larval state. Modulates chemosensory avoidance of octanol and quiescence during molting. Promotes basement membrane mobility during tissue remodeling. Involved in establishing left-right asymmetry during intestinal organogenesis. This Caenorhabditis elegans protein is Protein lin-12.